We begin with the raw amino-acid sequence, 510 residues long: Nectin-4 (510 aa).

A signal peptide spans 1-31 (MPLSLGAEMWGPEAWLLLLLLLASFTGRCPA). Residues 32-144 (GELETSDVVT…GSFQARLRLR (113 aa)) enclose the Ig-like V-type domain. The Extracellular segment spans residues 32 to 349 (GELETSDVVT…GKQVDLVSAS (318 aa)). Intrachain disulfides connect Cys52/Cys127, Cys171/Cys223, and Cys270/Cys315. 2 consecutive Ig-like C2-type domains span residues 148–237 (PPLP…QRIT) and 248–331 (ASVR…VTVD). Asn281 is a glycosylation site (N-linked (GlcNAc...) asparagine). Residues 350-370 (VVVVGVIAALLFCLLVVVVVL) form a helical membrane-spanning segment. Topologically, residues 371-510 (MSRYHRRKAQ…IYINGRGHLV (140 aa)) are cytoplasmic. Residues 399 to 412 (RRLHSHHTDPRSQP) are compositionally biased toward basic and acidic residues. Disordered stretches follow at residues 399 to 447 (RRLH…SYST) and 457 to 476 (QTEL…DQDE).

It belongs to the nectin family. Self-associates. Interacts via its Ig-like V-type domain with NECTIN1 Ig-like V-type domain. Interacts via its C-terminus with AFDN. As to quaternary structure, (Microbial infection) Interacts (via N-terminus) with measles virus hemagglutinin protein. In terms of processing, the soluble form is produced by proteolytic cleavage at the cell surface (shedding), probably by ADAM17/TACE. Predominantly expressed in placenta. Not detected in normal breast epithelium but expressed in breast carcinoma.

Its subcellular location is the cell membrane. It is found in the cell junction. The protein localises to the adherens junction. The protein resides in the secreted. Its function is as follows. Seems to be involved in cell adhesion through trans-homophilic and -heterophilic interactions, the latter including specifically interactions with NECTIN1. Does not act as receptor for alpha-herpesvirus entry into cells. In terms of biological role, (Microbial infection) Acts as a receptor for measles virus. The sequence is that of Nectin-4 from Homo sapiens (Human).